We begin with the raw amino-acid sequence, 1716 residues long: Histone-lysine N-methyltransferase SETD1A (1716 aa).

The segment at 60–89 is interaction with WDR82; sequence LQDPRCHVRSKARDFSLPVPKFKLDEFYIG. Positions 84–172 constitute an RRM domain; the sequence is DEFYIGQIPL…NIIHAQLDIK (89 aa). Disordered regions lie at residues 194–367, 380–499, 516–670, 849–869, 911–1206, 1230–1259, and 1275–1297; these read PTGG…SSYP, TSYP…AQHS, FSFL…PPPH, AKPFQNAAKQQAKEEDKEKMK, KRKE…SRKV, EEVARGGRNRAGGRVRSTEEEEATESGTEV, and GLATLPTGDDSEATETSDEAERP. Residues 222 to 231 are compositionally biased toward low complexity; sequence SDTAAYPAGT. Positions 243-277 are enriched in polar residues; sequence CSQDTNFSSSRQDTPSSFGQFTPQSSQGTPYTSRG. 2 stretches are compositionally biased toward low complexity: residues 278–295 and 315–357; these read STPYSQDSAYSSSTTSTS and STSS…SSAS. The span at 430–440 shows a compositional bias: pro residues; sequence SEAPPPEPPEP. Residues 441 to 461 show a composition bias toward gly residues; it reads GGGGGGSGGGGGGGGGGGGGA. Position 477 is a phosphoserine (Ser-477). The segment covering 477–487 has biased composition (low complexity); the sequence is SPARSGSPAPE. Residues 488-499 are compositionally biased toward polar residues; sequence TTNESVPFAQHS. Residues Ser-521 and Ser-578 each carry the phosphoserine modification. Residues 581 to 591 show a composition bias toward polar residues; it reads ANGQNQASPCS. Composition is skewed to pro residues over residues 606-631 and 638-670; these read SPPPAPTPPQQPPPPPPPPPPPPPPY and GYPPHQPAYLLPPRPDGPPPPEYPPPPPPPPPH. Over residues 859–869 the composition is skewed to basic and acidic residues; the sequence is QAKEEDKEKMK. Ser-930 bears the Phosphoserine mark. 2 stretches are compositionally biased toward acidic residues: residues 991–1009 and 1018–1027; these read KDEDDDDEDEEDEEQEEAV and ASDGEDEDSD. The segment covering 1028-1071 has biased composition (low complexity); the sequence is SSSQCSLYADSDGENGSTSDSESGSSSSSSSSSSSSSSSSSSES. A Phosphoserine modification is found at Ser-1110. The span at 1130–1150 shows a compositional bias: pro residues; that stretch reads EEPPPSVPQPPAEPPAGPPDA. The segment covering 1283–1292 has biased composition (acidic residues); the sequence is DDSEATETSD. An HCFC1-binding motif (HBM) motif is present at residues 1307-1311; the sequence is EHNYA. Disordered regions lie at residues 1355 to 1427 and 1480 to 1508; these read EEPK…FEPR and TNLSTPKRKRRPQDGPREHQTGSARSEGY. The segment covering 1369–1383 has biased composition (acidic residues); that stretch reads EGEEEEEDEEEESES. Residues 1399-1412 show a composition bias toward basic residues; that stretch reads RRRSLRSHTRRRRP. Over residues 1413 to 1424 the composition is skewed to pro residues; it reads PLPPPPPPPPSF. The tract at residues 1424-1459 is interaction with CFP1; sequence FEPRSEFEQMTILYDIWNSGLDLEDMSYLRLTYERL. The interval 1459–1546 is interaction with ASH2L, RBBP5 and WDR5; that stretch reads LLQQTSGADW…GTNRVLSERR (88 aa). The short motif at 1501-1506 is the WDR5 interaction motif (WIN) element; it reads GSARSE. The short motif at 1546–1551 is the RxxxRR motif element; sequence RSEQRR. The region spanning 1577–1694 is the SET domain; the sequence is KKLRFGRSRI…VDEEITYDYK (118 aa). An S-adenosyl-L-methionine-binding site is contributed by Tyr-1693. Positions 1700 to 1716 constitute a Post-SET domain; sequence NKIPCLCGTESCRGSLN.

Belongs to the class V-like SAM-binding methyltransferase superfamily. In terms of assembly, component of the SET1A/COMPASS complex composed of the catalytic subunit SETD1A, WDR5, WDR82, RBBP5, ASH2L/ASH2, CXXC1/CFP1, HCFC1 and DPY30 homotrimer. Forms a core complex with the evolutionary conserved subcomplex WRAD composed of WDR5, RBBP5, ASH2L/ASH2 and DPY30 subunits; WRAD differentially stimulates the methyltransferase activity. Interacts with BOD1L1 (via COMPASS-Shg1 domain) at replication forks. Interacts with HCFC1. Interacts with ASH2/ASH2L. Interacts with CXXC1/CFP1. Interacts with RBBP5. Interacts (via N-terminal region) with WDR82; the interaction is direct. Interacts (via the RRM domain) with hyperphosphorylated C-terminal domain (CTD) of RNA polymerase II large subunit (POLR2A) only in the presence of WDR82. Binds specifically to CTD heptad repeats phosphorylated on 'Ser-5' of each heptad. Interacts with ZNF335. Interacts with SUPT6H. Interacts with NAP1L1. Interacts (via WIN motif) with WDR5.

It is found in the nucleus. Its subcellular location is the nucleus speckle. The protein localises to the chromosome. It localises to the cytoplasm. It catalyses the reaction L-lysyl(4)-[histone H3] + S-adenosyl-L-methionine = N(6)-methyl-L-lysyl(4)-[histone H3] + S-adenosyl-L-homocysteine + H(+). The catalysed reaction is N(6)-methyl-L-lysyl(4)-[histone H3] + S-adenosyl-L-methionine = N(6),N(6)-dimethyl-L-lysyl(4)-[histone H3] + S-adenosyl-L-homocysteine + H(+). The enzyme catalyses N(6),N(6)-dimethyl-L-lysyl(4)-[histone H3] + S-adenosyl-L-methionine = N(6),N(6),N(6)-trimethyl-L-lysyl(4)-[histone H3] + S-adenosyl-L-homocysteine + H(+). Functionally, histone methyltransferase that catalyzes methyl group transfer from S-adenosyl-L-methionine to the epsilon-amino group of 'Lys-4' of histone H3 (H3K4) via a non-processive mechanism. Part of chromatin remodeling machinery, forms H3K4me1, H3K4me2 and H3K4me3 methylation marks at active chromatin sites where transcription and DNA repair take place. Responsible for H3K4me3 enriched promoters and transcriptional programming of inner mass stem cells and neuron progenitors during embryogenesis. Required for H3K4me1 mark at stalled replication forks. Mediates FANCD2-dependent nucleosome remodeling and RAD51 nucleofilaments stabilization at reversed forks, protecting them from nucleolytic degradation. Does not methylate 'Lys-4' of histone H3 if the neighboring 'Lys-9' residue is already methylated. Has RNA binding activity towards transcripts involved in RNA processing and the DNA damage response. This chain is Histone-lysine N-methyltransferase SETD1A (Setd1a), found in Mus musculus (Mouse).